Here is a 253-residue protein sequence, read N- to C-terminus: Phosphate import ATP-binding protein PstB 3 (253 aa).

In terms of domain architecture, ABC transporter spans 8-248 (LVINNLDLYY…PQDERTENYI (241 aa)). 40–47 (GPSGCGKS) is an ATP binding site.

Belongs to the ABC transporter superfamily. Phosphate importer (TC 3.A.1.7) family. In terms of assembly, the complex is composed of two ATP-binding proteins (PstB), two transmembrane proteins (PstC and PstA) and a solute-binding protein (PstS).

The protein localises to the cell membrane. The catalysed reaction is phosphate(out) + ATP + H2O = ADP + 2 phosphate(in) + H(+). Functionally, part of the ABC transporter complex PstSACB involved in phosphate import. Responsible for energy coupling to the transport system. This is Phosphate import ATP-binding protein PstB 3 from Streptococcus agalactiae serotype III (strain NEM316).